A 476-amino-acid chain; its full sequence is Transmembrane transporter FPSE_08127 (476 aa).

Residues 72-92 traverse the membrane as a helical segment; it reads ILAIPAALGALGSIGGSLCII. N-linked (GlcNAc...) asparagine glycosylation is present at N111. 9 helical membrane-spanning segments follow: residues 133-153, 164-184, 192-212, 231-251, 275-295, 317-337, 364-384, 387-407, and 431-451; these read LVGV…VVAI, GTCT…FSAI, WLTW…VVAV, WAPI…NIFI, ACLV…LVIY, VAYG…QHVA, LGIN…VPIL, LLGL…PALL, and LIMM…VVLI.

This sequence belongs to the amino acid/polyamine transporter 2 family.

It is found in the membrane. Transmembrane transporter; part of the Fusarium detoxification of benzoxazolinone cluster involved in the degradation of benzoxazolinones produced by the host plant. Maize, wheat, and rye produce the 2 benzoxazinone phytoanticipins 2,4-dihy-droxy-7-methoxy-1,4-benzoxazin-3-one (DIMBOA) and 2,4-dihydroxy-1,4-benzoxazin-3-one (DIBOA) that, due to their inherent instability once released, spontaneously degrade to the more stable corresponding benzoxazolinones, 6-methoxy-2-benzoxazolinone (MBOA) and 2-benzoxazolinone (BOA), respectively. FPSE_08127 is proposed to shuttle metabolites of benzoxazolinone degradation. The polypeptide is Transmembrane transporter FPSE_08127 (Fusarium pseudograminearum (strain CS3096) (Wheat and barley crown-rot fungus)).